Consider the following 280-residue polypeptide: Diaminopimelate epimerase (280 aa).

Asn-13 and Asn-66 together coordinate substrate. Catalysis depends on Cys-75, which acts as the Proton donor. Substrate contacts are provided by residues 76 to 77 (GN), Asn-165, Asn-198, and 216 to 217 (ER). The active-site Proton acceptor is the Cys-225. Residue 226–227 (GT) participates in substrate binding.

The protein belongs to the diaminopimelate epimerase family. As to quaternary structure, homodimer.

The protein localises to the cytoplasm. The enzyme catalyses (2S,6S)-2,6-diaminopimelate = meso-2,6-diaminopimelate. The protein operates within amino-acid biosynthesis; L-lysine biosynthesis via DAP pathway; DL-2,6-diaminopimelate from LL-2,6-diaminopimelate: step 1/1. Catalyzes the stereoinversion of LL-2,6-diaminopimelate (L,L-DAP) to meso-diaminopimelate (meso-DAP), a precursor of L-lysine and an essential component of the bacterial peptidoglycan. The sequence is that of Diaminopimelate epimerase from Cyanothece sp. (strain PCC 7425 / ATCC 29141).